A 242-amino-acid polypeptide reads, in one-letter code: MAGHSKWANIQHKKARQDAKRGKIFTRLIKEITVAARMGGGDPGSNPRLRLALEKAAENNMPKDNVQRAIDKGTGNLEGVEYIELRYEGYGIGGAALMVDCLTDNKTRTVADVRHAFTKNGGNLGTDGCVAFNFVHQGYLVFEPGVDEDALMEAALEAGAEDVVTNDDGSIEVITAPNDWAGVKSALEAAGYKSVDGDVTMRAQNETELSGDDAVKMQKLIDALEDLDDVQDVYTSAVLNLD.

This sequence belongs to the TACO1 family.

The protein resides in the cytoplasm. In Neisseria meningitidis serogroup B (strain ATCC BAA-335 / MC58), this protein is Probable transcriptional regulatory protein NMB1648.